Reading from the N-terminus, the 218-residue chain is Uracil-DNA glycosylase (218 aa).

The Proton acceptor role is filled by aspartate 60.

This sequence belongs to the uracil-DNA glycosylase (UDG) superfamily. UNG family.

The protein localises to the cytoplasm. It catalyses the reaction Hydrolyzes single-stranded DNA or mismatched double-stranded DNA and polynucleotides, releasing free uracil.. In terms of biological role, excises uracil residues from the DNA which can arise as a result of misincorporation of dUMP residues by DNA polymerase or due to deamination of cytosine. In Shewanella oneidensis (strain ATCC 700550 / JCM 31522 / CIP 106686 / LMG 19005 / NCIMB 14063 / MR-1), this protein is Uracil-DNA glycosylase.